The following is a 336-amino-acid chain: MYYPFVRKALFQLDPERAHEVTFQQLRRVTGTPLEMLVRQKVPARPVTCMGLTFKNPLGLAAGLDKNGECIDALGAMGFGSIEIGTVTPRPQPGNDKPRIFRLVDAEGLINRMGFNNHGVDNLVENVKKAHFDGVLGINIGKNKDTPVEHGKDDYLICMEKVYPYAGYIAINISSPNTPGLRTLQYGEALDDLLSGIKNKQLELQQKHQKYVPVAIKIAPDLLPEELIQVADSLVRHNIDGVIATNTTLDRSLVQGMKHCDETGGLSGRPLQLKSTEIIRMLSAELNGRLPIIGVGGIDSVIAAREKIAAGASLVQIYSGFIFKGPPLIKEIVTHI.

Residues 62 to 66 and threonine 86 each bind FMN; that span reads AGLDK. Lysine 66 is a substrate binding site. A substrate-binding site is contributed by 111–115; that stretch reads NRMGF. Residues asparagine 139 and asparagine 172 each contribute to the FMN site. A substrate-binding site is contributed by asparagine 172. Serine 175 acts as the Nucleophile in catalysis. Asparagine 177 is a binding site for substrate. 2 residues coordinate FMN: lysine 217 and threonine 245. Residue 246–247 participates in substrate binding; that stretch reads NT. FMN-binding positions include glycine 268, glycine 297, and 318 to 319; that span reads YS.

The protein belongs to the dihydroorotate dehydrogenase family. Type 2 subfamily. Monomer. FMN serves as cofactor.

It localises to the cell membrane. It carries out the reaction (S)-dihydroorotate + a quinone = orotate + a quinol. The protein operates within pyrimidine metabolism; UMP biosynthesis via de novo pathway; orotate from (S)-dihydroorotate (quinone route): step 1/1. Functionally, catalyzes the conversion of dihydroorotate to orotate with quinone as electron acceptor. This is Dihydroorotate dehydrogenase (quinone) from Klebsiella pneumoniae subsp. pneumoniae (strain ATCC 700721 / MGH 78578).